Consider the following 156-residue polypeptide: MPRKGPAPKHTVVVDPVYGSPLVTALVNKVLLSGKKSVAERIVYGALEGAKNKTGNDPVVTLKRALDNVKPTLEVRSRRVGGATYQVPVEVRAGRSTTLALRWIVGYSRARREKTMTERLMNELIDASNGLGASVKRREDTHKMAESNKAFAHYRW.

It belongs to the universal ribosomal protein uS7 family. Part of the 30S ribosomal subunit. Contacts proteins S9 and S11.

In terms of biological role, one of the primary rRNA binding proteins, it binds directly to 16S rRNA where it nucleates assembly of the head domain of the 30S subunit. Is located at the subunit interface close to the decoding center, probably blocks exit of the E-site tRNA. The sequence is that of Small ribosomal subunit protein uS7 from Frankia casuarinae (strain DSM 45818 / CECT 9043 / HFP020203 / CcI3).